Here is a 197-residue protein sequence, read N- to C-terminus: Putative AgrB-like protein (197 aa).

4 consecutive transmembrane segments (helical) span residues 29–49, 79–99, 102–122, and 143–163; these read FGFT…AVGL, SIGC…VPFA, YAWI…APYY, and ILIV…LVLG.

The protein belongs to the AgrB family.

Its subcellular location is the cell membrane. In terms of biological role, may be involved in the proteolytic processing of a quorum sensing system signal molecule precursor. The polypeptide is Putative AgrB-like protein (Halalkalibacterium halodurans (strain ATCC BAA-125 / DSM 18197 / FERM 7344 / JCM 9153 / C-125) (Bacillus halodurans)).